Consider the following 109-residue polypeptide: Large ribosomal subunit protein uL24 (109 aa).

Belongs to the universal ribosomal protein uL24 family. In terms of assembly, part of the 50S ribosomal subunit.

Its function is as follows. One of two assembly initiator proteins, it binds directly to the 5'-end of the 23S rRNA, where it nucleates assembly of the 50S subunit. In terms of biological role, one of the proteins that surrounds the polypeptide exit tunnel on the outside of the subunit. The protein is Large ribosomal subunit protein uL24 of Rickettsia akari (strain Hartford).